Consider the following 360-residue polypeptide: S-adenosylmethionine-dependent nucleotide dehydratase RSAD2 (360 aa).

The segment at Lys-44–Pro-71 is disordered. Residues Val-49 to Pro-63 show a composition bias toward basic and acidic residues. The Radical SAM core domain maps to Pro-68 to Leu-288. Residues Cys-82, Cys-86, and Cys-89 each contribute to the [4Fe-4S] cluster site. N6-acetyllysine is present on Lys-196. Residue Lys-205 forms a Glycyl lysine isopeptide (Lys-Gly) (interchain with G-Cter in ubiquitin) linkage.

This sequence belongs to the radical SAM superfamily. RSAD2 family. In terms of assembly, homodimer. Interacts with IRAK1 and TRAF6. Interacts with FPPS. Interacts with HADHB. Interacts (via C-terminus) with VAPA/VAP33 (via C-terminus). [4Fe-4S] cluster is required as a cofactor. In terms of processing, acetylated by HAT1. HAT1-mediated acetylation of Lys-196 in turn recruits UBE4A that stimulates RSAD2 polyubiquitination leading to proteasomal degradation. 'Lys-6'-linked polyubiquitination at Lys-205 leads to RSAD2 protein degradation. In neonatal rat tibia, specifically localized in cells of the periosteum, in osteoblasts lining endosteal and peristeal bone surfaces, to articular surfaces of cartilage and in perichondral cells but not in chondrocytes (at protein level). Expressed predominantly in bone marrow and spleen.

It localises to the endoplasmic reticulum membrane. Its subcellular location is the golgi apparatus. It is found in the endoplasmic reticulum. The protein localises to the lipid droplet. The protein resides in the mitochondrion. It localises to the mitochondrion inner membrane. Its subcellular location is the mitochondrion outer membrane. It carries out the reaction CTP + AH2 + S-adenosyl-L-methionine = 3'-deoxy-3',4'-didehydro-CTP + 5'-deoxyadenosine + L-methionine + A + H2O + H(+). Its activity is regulated as follows. IRAK1 and TRAF6 synergistically activate RSAD2 increasing its activity with CTP as substrate about 10-fold. Interferon-inducible antiviral protein which plays a major role in the cell antiviral state induced by type I and type II interferon. Catalyzes the conversion of cytidine triphosphate (CTP) to 3'-deoxy-3',4'-didehydro-CTP (ddhCTP) via a SAM-dependent radical mechanism. In turn, ddhCTP acts as a chain terminator for the RNA-dependent RNA polymerases from multiple viruses and directly inhibits viral replication. Therefore, inhibits a wide range of DNA and RNA viruses. Also promotes TLR7 and TLR9-dependent production of IFN-beta production in plasmacytoid dendritic cells (pDCs) by facilitating 'Lys-63'-linked ubiquitination of IRAK1 by TRAF6. Plays a role in CD4+ T-cells activation and differentiation. Facilitates T-cell receptor (TCR)-mediated GATA3 activation and optimal T-helper 2 (Th2) cytokine production by modulating NFKB1 and JUNB activities. Can inhibit secretion of soluble proteins. This chain is S-adenosylmethionine-dependent nucleotide dehydratase RSAD2, found in Rattus norvegicus (Rat).